The primary structure comprises 133 residues: UPF0102 protein AB57_1130 (133 aa).

This sequence belongs to the UPF0102 family.

The protein is UPF0102 protein AB57_1130 of Acinetobacter baumannii (strain AB0057).